The primary structure comprises 445 residues: Chromosome partition protein MukF (445 aa).

The interval 213–241 is leucine-zipper; sequence LSETSSTLRELQDTLQAASDELQTQILDI.

This sequence belongs to the MukF family. As to quaternary structure, interacts, and probably forms a ternary complex, with MukE and MukB via its C-terminal region. The complex formation is stimulated by calcium or magnesium. It is required for an interaction between MukE and MukB.

It localises to the cytoplasm. The protein localises to the nucleoid. Functionally, involved in chromosome condensation, segregation and cell cycle progression. May participate in facilitating chromosome segregation by condensation DNA from both sides of a centrally located replisome during cell division. Not required for mini-F plasmid partitioning. Probably acts via its interaction with MukB and MukE. Overexpression results in anucleate cells. It has a calcium binding activity. The chain is Chromosome partition protein MukF from Vibrio campbellii (strain ATCC BAA-1116).